A 257-amino-acid polypeptide reads, in one-letter code: Melatonin receptor type 1A (257 aa).

Residues 5 to 22 are Extracellular-facing; that stretch reads LASIVNDGWSLSSLHCQL. The cysteines at positions 20 and 97 are disulfide-linked. The chain crosses the membrane as a helical span at residues 23 to 43; the sequence is SGFLMGLSVIGSVFNITGIAI. The Cytoplasmic segment spans residues 44–64; that stretch reads NRYCCICHSLRYNKLYSSTNS. The chain crosses the membrane as a helical span at residues 65-85; the sequence is LCYVFLIWMLTLVAIVPNLCV. Topologically, residues 86–107 are extracellular; sequence GTLQYDPRIYSCTFTQSVSSAY. A helical transmembrane segment spans residues 108–128; the sequence is TIAVVVFHFIVPMLVVIFCYL. The Cytoplasmic portion of the chain corresponds to 129 to 160; that stretch reads RIWALVLQVRWRVKPDNKPKLKPQDFRNFVTM. Residues 161–181 traverse the membrane as a helical segment; sequence FVVFVLFAICWAPLNFIGLVV. Residues 182 to 194 lie on the Extracellular side of the membrane; the sequence is ASEPASMAPRIPE. A helical membrane pass occupies residues 195 to 215; that stretch reads WLFVASYYMGYFNSCLNAIIY. Over 216–257 the chain is Cytoplasmic; it reads GLLNQNFRQEYRKIIVSLCTTKMFFVDSSNHVAHRIKRKPSP.

Belongs to the G-protein coupled receptor 1 family.

Its subcellular location is the cell membrane. In terms of biological role, high affinity receptor for melatonin. Likely to mediate the reproductive and circadian actions of melatonin. The activity of this receptor is mediated by pertussis toxin sensitive G proteins that inhibit adenylate cyclase activity. Possibly involved in sleep induction, by melatonin activation of the potassium channel KCNMA1/BK and the dissociation of G-beta and G-gamma subunits, thereby decreasing synaptic transmission. The sequence is that of Melatonin receptor type 1A (MTNR1A) from Bos taurus (Bovine).